A 496-amino-acid polypeptide reads, in one-letter code: Ankyrin repeat domain-containing protein 53 (496 aa).

The span at 1–15 (MASAGSTARRAGSGS) shows a compositional bias: low complexity. Positions 1–66 (MASAGSTARR…RPSEESDQTT (66 aa)) are disordered. The segment covering 51–60 (AESKQPRPSE) has biased composition (basic and acidic residues). ANK repeat units lie at residues 105–135 (KGFT…PVNL), 139–172 (NSQT…ALNA), and 176–205 (NGCT…NVHA). Positions 292–320 (LVSNTKQARATALSKTPEQRGSQCSSSFH) are disordered.

As to quaternary structure, interacts with PSRC1; recruited by PSRC1 to the spindle during mitosis. In terms of processing, phosphorylated during mitosis.

The protein localises to the cytoplasm. It is found in the cytoskeleton. The protein resides in the spindle. It localises to the spindle pole. Required for normal progression through mitosis. Involved in chromosome alignment and cytokinesis via regulation of microtubules polymerization. The sequence is that of Ankyrin repeat domain-containing protein 53 (ANKRD53) from Macaca fascicularis (Crab-eating macaque).